A 427-amino-acid chain; its full sequence is MSLIEEIVARQIFDSRGNPTIEVDVITENGLIGRAAVPSGASTGKHEAVELRDNDKSIYMGKSVLKAVANVNDIIAPELIGSHVFEQNLIDRLMIDLDGTANKGKLGANAILGVSLALAKAAAQEAGLPLYRYVGGVSANTLPVPMMNIINGGSHADNSIDFQEFMIMPTGAKSFTEAMRMGSEIFHNLAKVLKSKGMSTNVGDEGGFAPNIASNEDALITVIQAIEAAGYRPGEDVMIAFDAASSEFYDSETKLYHFKKSTGDKLTSSQMASYWADLVKRYPIVSIEDGMDEDDWSGWAELTKLVGDKVQLVGDDLFVTNVSRLQQGIDQGIANSILVKVNQIGSLTETISAVNLAKRNSYTSVMSHRSGETEDNTIADLAVALNCGQIKTGSCSRSDRMAKYNQLLRIEEELGEAAYFPGKNMRK.

Glutamine 163 provides a ligand contact to (2R)-2-phosphoglycerate. Glutamate 205 acts as the Proton donor in catalysis. Residues aspartate 242, glutamate 288, and aspartate 315 each contribute to the Mg(2+) site. The (2R)-2-phosphoglycerate site is built by lysine 340, arginine 369, serine 370, and lysine 391. Lysine 340 serves as the catalytic Proton acceptor.

The protein belongs to the enolase family. Requires Mg(2+) as cofactor.

The protein resides in the cytoplasm. It localises to the secreted. It is found in the cell surface. The catalysed reaction is (2R)-2-phosphoglycerate = phosphoenolpyruvate + H2O. The protein operates within carbohydrate degradation; glycolysis; pyruvate from D-glyceraldehyde 3-phosphate: step 4/5. In terms of biological role, catalyzes the reversible conversion of 2-phosphoglycerate (2-PG) into phosphoenolpyruvate (PEP). It is essential for the degradation of carbohydrates via glycolysis. The sequence is that of Enolase from Cytophaga hutchinsonii (strain ATCC 33406 / DSM 1761 / CIP 103989 / NBRC 15051 / NCIMB 9469 / D465).